Consider the following 209-residue polypeptide: Kynurenine formamidase (209 aa).

A substrate-binding site is contributed by Trp20. Zn(2+) contacts are provided by His50, His54, and Asp56. His60 serves as the catalytic Proton donor/acceptor. The Zn(2+) site is built by His161 and Glu173.

This sequence belongs to the Cyclase 1 superfamily. KynB family. Homodimer. Zn(2+) is required as a cofactor.

The enzyme catalyses N-formyl-L-kynurenine + H2O = L-kynurenine + formate + H(+). Its pathway is amino-acid degradation; L-tryptophan degradation via kynurenine pathway; L-kynurenine from L-tryptophan: step 2/2. Functionally, catalyzes the hydrolysis of N-formyl-L-kynurenine to L-kynurenine, the second step in the kynurenine pathway of tryptophan degradation. This chain is Kynurenine formamidase, found in Bacillus thuringiensis subsp. konkukian (strain 97-27).